The following is a 141-amino-acid chain: Hemoglobin subunit alpha (141 aa).

A Globin domain is found at 1-141; the sequence is VLSASDKTNL…VSTVLTSKYR (141 aa). Ser-3 bears the Phosphoserine mark. Lys-7 bears the N6-succinyllysine mark. Thr-8 carries the phosphothreonine modification. At Lys-11 the chain carries N6-succinyllysine. Position 16 is an N6-acetyllysine; alternate (Lys-16). Residue Lys-16 is modified to N6-succinyllysine; alternate. At Tyr-24 the chain carries Phosphotyrosine. Ser-35 carries the phosphoserine modification. N6-succinyllysine is present on Lys-40. Residue Ser-49 is modified to Phosphoserine. His-58 is a binding site for O2. His-87 contacts heme b. Ser-102 carries the phosphoserine modification. Phosphothreonine is present on Thr-108. At Ser-124 the chain carries Phosphoserine. Phosphothreonine occurs at positions 134 and 137. The residue at position 138 (Ser-138) is a Phosphoserine.

It belongs to the globin family. In terms of assembly, heterotetramer of two alpha chains and two beta chains. In terms of tissue distribution, red blood cells.

Functionally, involved in oxygen transport from the lung to the various peripheral tissues. This Blarina brevicauda (Northern short-tailed shrew) protein is Hemoglobin subunit alpha.